The following is a 298-amino-acid chain: 3'-5' exonuclease crn-4 (298 aa).

An Exonuclease domain is found at 12–192; the sequence is LILDFETTSD…DDCLNIATIL (181 aa). Positions 15, 17, and 184 each coordinate Mg(2+). Residues cysteine 210, cysteine 260, cysteine 263, and cysteine 270 each coordinate Zn(2+).

Homodimer (via C-terminus). Interacts with crn-5; interaction promotes the DNase activity of crn-4. Interacts with cps-6, crn-1 and cyn-13. Mg(2+) serves as cofactor.

Exonuclease activity is inhibited in vitro by pontacyl violet 6R (PV6R), p-chloromercuriphenyl sulfonate (PCMPS), 5,5'-dithiobis(2-nitrobenzoic acid) (DTNB), aurintricarboxylic acid (ATA), 2-morpholin-4-ylethanesulfonate (MES), 4-[(4,6-dichloro-1,3,5-triazin-2-yl)amino]-2-(3-hydroxy-6-oxoxanthen-9-yl)benzoic acid (DR396) and fmoc-d-Cha-OH (FDCO). Interaction with ssRNA is reduced in vitro by PV6R. Its function is as follows. Possesses 3'-&gt;5' exoribonuclease activity in digestion of DNA and RNA. Cleaves nucleic acid substrates with efficiencies in the following order: single-stranded RNA (ssRNA) &gt; double-stranded DNA (dsDNA) &gt; single-stranded DNA (ssDNA). Involved in apoptotic DNA degradation. This chain is 3'-5' exonuclease crn-4 (crn-4), found in Caenorhabditis elegans.